A 38-amino-acid chain; its full sequence is Odorant-binding protein 2 (38 aa).

Belongs to the calycin superfamily. Lipocalin family. As to expression, nasal mucosa.

It is found in the secreted. It localises to the extracellular space. Functionally, this soluble protein may play a specific role in odor discrimination and perception. The chain is Odorant-binding protein 2 from Hystrix cristata (North African crested porcupine).